A 192-amino-acid chain; its full sequence is Peptide deformylase 1 (192 aa).

Fe cation is bound by residues Cys101 and His143. Glu144 is a catalytic residue. His147 serves as a coordination point for Fe cation.

The protein belongs to the polypeptide deformylase family. Fe(2+) serves as cofactor.

The enzyme catalyses N-terminal N-formyl-L-methionyl-[peptide] + H2O = N-terminal L-methionyl-[peptide] + formate. Removes the formyl group from the N-terminal Met of newly synthesized proteins. Requires at least a dipeptide for an efficient rate of reaction. N-terminal L-methionine is a prerequisite for activity but the enzyme has broad specificity at other positions. This chain is Peptide deformylase 1, found in Prochlorococcus marinus (strain MIT 9313).